The following is a 505-amino-acid chain: Lysine--tRNA ligase (505 aa).

The Mg(2+) site is built by E415 and E422.

The protein belongs to the class-II aminoacyl-tRNA synthetase family. In terms of assembly, homodimer. Mg(2+) serves as cofactor.

It localises to the cytoplasm. The enzyme catalyses tRNA(Lys) + L-lysine + ATP = L-lysyl-tRNA(Lys) + AMP + diphosphate. The polypeptide is Lysine--tRNA ligase (Citrobacter koseri (strain ATCC BAA-895 / CDC 4225-83 / SGSC4696)).